A 728-amino-acid polypeptide reads, in one-letter code: Phosphoribosylformylglycinamidine synthase subunit PurL (728 aa).

His54 is a catalytic residue. Positions 57 and 96 each coordinate ATP. Residue Glu98 coordinates Mg(2+). Residues 99–102 (SHNH) and Arg121 contribute to the substrate site. The active-site Proton acceptor is the His100. Residue Asp122 participates in Mg(2+) binding. Gln245 is a binding site for substrate. Asp273 contributes to the Mg(2+) binding site. 317 to 319 (ETQ) lines the substrate pocket. Asp495 and Gly532 together coordinate ATP. Asn533 is a Mg(2+) binding site. Residue Ser535 coordinates substrate.

This sequence belongs to the FGAMS family. In terms of assembly, monomer. Part of the FGAM synthase complex composed of 1 PurL, 1 PurQ and 2 PurS subunits.

It is found in the cytoplasm. It catalyses the reaction N(2)-formyl-N(1)-(5-phospho-beta-D-ribosyl)glycinamide + L-glutamine + ATP + H2O = 2-formamido-N(1)-(5-O-phospho-beta-D-ribosyl)acetamidine + L-glutamate + ADP + phosphate + H(+). Its pathway is purine metabolism; IMP biosynthesis via de novo pathway; 5-amino-1-(5-phospho-D-ribosyl)imidazole from N(2)-formyl-N(1)-(5-phospho-D-ribosyl)glycinamide: step 1/2. In terms of biological role, part of the phosphoribosylformylglycinamidine synthase complex involved in the purines biosynthetic pathway. Catalyzes the ATP-dependent conversion of formylglycinamide ribonucleotide (FGAR) and glutamine to yield formylglycinamidine ribonucleotide (FGAM) and glutamate. The FGAM synthase complex is composed of three subunits. PurQ produces an ammonia molecule by converting glutamine to glutamate. PurL transfers the ammonia molecule to FGAR to form FGAM in an ATP-dependent manner. PurS interacts with PurQ and PurL and is thought to assist in the transfer of the ammonia molecule from PurQ to PurL. This chain is Phosphoribosylformylglycinamidine synthase subunit PurL, found in Macrococcus caseolyticus (strain JCSC5402) (Macrococcoides caseolyticum).